Consider the following 238-residue polypeptide: Succinate dehydrogenase assembly factor 2, mitochondrial (238 aa).

The segment at 47–82 is disordered; sequence GLKADGSRADQAEAGASQSLDKQSRTLDSVRDDTLS. The span at 68–80 shows a compositional bias: basic and acidic residues; that stretch reads KQSRTLDSVRDDT.

It belongs to the SDHAF2 family. As to quaternary structure, interacts with the flavoprotein subunit within the SDH catalytic dimer.

Its subcellular location is the mitochondrion matrix. Its function is as follows. Plays an essential role in the assembly of succinate dehydrogenase (SDH), an enzyme complex (also referred to as respiratory complex II) that is a component of both the tricarboxylic acid (TCA) cycle and the mitochondrial electron transport chain, and which couples the oxidation of succinate to fumarate with the reduction of ubiquinone (coenzyme Q) to ubiquinol. Required for flavinylation (covalent attachment of FAD) of the flavoprotein subunit of the SDH catalytic dimer. This Mycosarcoma maydis (Corn smut fungus) protein is Succinate dehydrogenase assembly factor 2, mitochondrial.